The chain runs to 89 residues: cAMP-regulated phosphoprotein 21 (89 aa).

The segment at 1–89 (MSEPGDLSQT…GGESLQDQTL (89 aa)) is disordered. N-acetylserine is present on Ser-2. Phosphoserine occurs at positions 33 and 56.

In terms of assembly, interacts with CALM1. In terms of processing, phosphorylation at Ser-56 favors interaction with CALM1.

It localises to the cytoplasm. In terms of biological role, may act as a competitive inhibitor of calmodulin-dependent enzymes such as calcineurin in neurons. The protein is cAMP-regulated phosphoprotein 21 (ARPP21) of Bos taurus (Bovine).